A 465-amino-acid chain; its full sequence is ATP synthase subunit beta (465 aa).

Residue G149–T156 coordinates ATP.

Belongs to the ATPase alpha/beta chains family. In terms of assembly, F-type ATPases have 2 components, CF(1) - the catalytic core - and CF(0) - the membrane proton channel. CF(1) has five subunits: alpha(3), beta(3), gamma(1), delta(1), epsilon(1). CF(0) has three main subunits: a(1), b(2) and c(9-12). The alpha and beta chains form an alternating ring which encloses part of the gamma chain. CF(1) is attached to CF(0) by a central stalk formed by the gamma and epsilon chains, while a peripheral stalk is formed by the delta and b chains.

Its subcellular location is the cell inner membrane. It catalyses the reaction ATP + H2O + 4 H(+)(in) = ADP + phosphate + 5 H(+)(out). Produces ATP from ADP in the presence of a proton gradient across the membrane. The catalytic sites are hosted primarily by the beta subunits. This Dictyoglomus turgidum (strain DSM 6724 / Z-1310) protein is ATP synthase subunit beta.